The following is a 350-amino-acid chain: Protein-glutamate methylesterase/protein-glutamine glutaminase 1 (350 aa).

One can recognise a Response regulatory domain in the interval 1–116 (MVVDDSAVVR…KGFLHDSAKV (116 aa)). Asp50 bears the 4-aspartylphosphate mark. The CheB-type methylesterase domain maps to 160-350 (LKTTEQLVAI…IPQAILDCSH (191 aa)). Catalysis depends on residues Ser172, His198, and Asp294.

This sequence belongs to the CheB family. In terms of processing, phosphorylated by CheA. Phosphorylation of the N-terminal regulatory domain activates the methylesterase activity.

Its subcellular location is the cytoplasm. The enzyme catalyses [protein]-L-glutamate 5-O-methyl ester + H2O = L-glutamyl-[protein] + methanol + H(+). The catalysed reaction is L-glutaminyl-[protein] + H2O = L-glutamyl-[protein] + NH4(+). Involved in chemotaxis. Part of a chemotaxis signal transduction system that modulates chemotaxis in response to various stimuli. Catalyzes the demethylation of specific methylglutamate residues introduced into the chemoreceptors (methyl-accepting chemotaxis proteins or MCP) by CheR. Also mediates the irreversible deamidation of specific glutamine residues to glutamic acid. The chain is Protein-glutamate methylesterase/protein-glutamine glutaminase 1 from Photobacterium profundum (strain SS9).